A 586-amino-acid chain; its full sequence is Putative ABC transporter ATP-binding protein MG187 homolog (586 aa).

The ABC transporter domain occupies 13-464; the sequence is IEFKNIVVDF…PANEFVATFL (452 aa). 45 to 52 is an ATP binding site; the sequence is GPSGCGKT.

Belongs to the ABC transporter superfamily.

This chain is Putative ABC transporter ATP-binding protein MG187 homolog, found in Mycoplasma pneumoniae (strain ATCC 29342 / M129 / Subtype 1) (Mycoplasmoides pneumoniae).